We begin with the raw amino-acid sequence, 116 residues long: Ribosome-binding factor A (116 aa).

The protein belongs to the RbfA family. Monomer. Binds 30S ribosomal subunits, but not 50S ribosomal subunits or 70S ribosomes.

Its subcellular location is the cytoplasm. One of several proteins that assist in the late maturation steps of the functional core of the 30S ribosomal subunit. Associates with free 30S ribosomal subunits (but not with 30S subunits that are part of 70S ribosomes or polysomes). Required for efficient processing of 16S rRNA. May interact with the 5'-terminal helix region of 16S rRNA. This is Ribosome-binding factor A from Streptococcus equi subsp. zooepidemicus (strain H70).